The sequence spans 163 residues: NADH-quinone oxidoreductase subunit I (163 aa).

2 consecutive 4Fe-4S ferredoxin-type domains span residues leucine 53 to glycine 83 and valine 94 to asparagine 123. Residues cysteine 63, cysteine 66, cysteine 69, cysteine 73, cysteine 103, cysteine 106, cysteine 109, and cysteine 113 each coordinate [4Fe-4S] cluster.

Belongs to the complex I 23 kDa subunit family. In terms of assembly, NDH-1 is composed of 14 different subunits. Subunits NuoA, H, J, K, L, M, N constitute the membrane sector of the complex. Requires [4Fe-4S] cluster as cofactor.

Its subcellular location is the cell inner membrane. It carries out the reaction a quinone + NADH + 5 H(+)(in) = a quinol + NAD(+) + 4 H(+)(out). Its function is as follows. NDH-1 shuttles electrons from NADH, via FMN and iron-sulfur (Fe-S) centers, to quinones in the respiratory chain. The immediate electron acceptor for the enzyme in this species is believed to be ubiquinone. Couples the redox reaction to proton translocation (for every two electrons transferred, four hydrogen ions are translocated across the cytoplasmic membrane), and thus conserves the redox energy in a proton gradient. The sequence is that of NADH-quinone oxidoreductase subunit I from Brucella melitensis biotype 1 (strain ATCC 23456 / CCUG 17765 / NCTC 10094 / 16M).